We begin with the raw amino-acid sequence, 362 residues long: Probable aromatic amino acid hydroxylase (362 aa).

2 residues coordinate Fe cation: histidine 200 and histidine 205.

Belongs to the biopterin-dependent aromatic amino acid hydroxylase family. It depends on Fe(2+) as a cofactor.

The chain is Probable aromatic amino acid hydroxylase from Chlamydia pneumoniae (Chlamydophila pneumoniae).